The sequence spans 63 residues: Large ribosomal subunit protein bL28 (63 aa).

Belongs to the bacterial ribosomal protein bL28 family.

This chain is Large ribosomal subunit protein bL28, found in Petrotoga mobilis (strain DSM 10674 / SJ95).